The chain runs to 118 residues: Small ribosomal subunit protein uS13 (118 aa).

The interval 94-118 (SLPLRGQRTKTNARTRKGPRKPIKR) is disordered.

The protein belongs to the universal ribosomal protein uS13 family. Part of the 30S ribosomal subunit. Forms a loose heterodimer with protein S19. Forms two bridges to the 50S subunit in the 70S ribosome.

In terms of biological role, located at the top of the head of the 30S subunit, it contacts several helices of the 16S rRNA. In the 70S ribosome it contacts the 23S rRNA (bridge B1a) and protein L5 of the 50S subunit (bridge B1b), connecting the 2 subunits; these bridges are implicated in subunit movement. Contacts the tRNAs in the A and P-sites. The chain is Small ribosomal subunit protein uS13 from Photobacterium profundum (strain SS9).